Reading from the N-terminus, the 174-residue chain is Ribulose bisphosphate carboxylase small subunit, chloroplastic 1 (174 aa).

The transit peptide at 1–45 (MAPAVMASSATTVAPFQGLKSTAGLPVSRRSRGSLGSVSNGGRIR) directs the protein to the chloroplast.

This sequence belongs to the RuBisCO small chain family. As to quaternary structure, heterohexadecamer of 8 large and 8 small subunits.

It localises to the plastid. The protein resides in the chloroplast. In terms of biological role, ruBisCO catalyzes two reactions: the carboxylation of D-ribulose 1,5-bisphosphate, the primary event in carbon dioxide fixation, as well as the oxidative fragmentation of the pentose substrate. Both reactions occur simultaneously and in competition at the same active site. Although the small subunit is not catalytic it is essential for maximal activity. The chain is Ribulose bisphosphate carboxylase small subunit, chloroplastic 1 from Triticum aestivum (Wheat).